The chain runs to 388 residues: Histone H2A.Y (388 aa).

LRR repeat units follow at residues 54–75 (SLQM…PHVP), 76–96 (SLIR…QYLR), and 100–121 (HLQT…KRLG). One can recognise an LRRCT domain in the interval 134–172 (NPVVNTNNYRNLVFNLFPSLVILDTLDKNGIDQEKAALD). Residues 256-279 (RKAPASRNGGVPSKAGKGKMNAFS) form a disordered region.

Belongs to the histone H2A family. In terms of assembly, the nucleosome is a histone octamer containing two molecules each of H2A, H2B, H3 and H4 assembled in one H3-H4 heterotetramer and two H2A-H2B heterodimers. The octamer wraps approximately 147 bp of DNA.

It localises to the nucleus. The protein localises to the chromosome. Functionally, variant histone H2A which replaces conventional H2A in a subset of nucleosomes. Nucleosomes wrap and compact DNA into chromatin, limiting DNA accessibility to the cellular machineries which require DNA as a template. Histones thereby play a central role in transcription regulation, DNA repair, DNA replication and chromosomal stability. DNA accessibility is regulated via a complex set of post-translational modifications of histones, also called histone code, and nucleosome remodeling. The chain is Histone H2A.Y (HTAY) from Tetrahymena thermophila (strain SB210).